Reading from the N-terminus, the 401-residue chain is Acetate kinase (401 aa).

Asn-7 contributes to the Mg(2+) binding site. Lys-14 is a binding site for ATP. Arg-91 is a substrate binding site. Residue Asp-148 is the Proton donor/acceptor of the active site. Residues 208–212, 283–285, and 332–336 each bind ATP; these read HLGNG, DFR, and GVGEN. A Mg(2+)-binding site is contributed by Glu-385.

Belongs to the acetokinase family. Homodimer. Mg(2+) is required as a cofactor. Requires Mn(2+) as cofactor.

Its subcellular location is the cytoplasm. It carries out the reaction acetate + ATP = acetyl phosphate + ADP. The protein operates within metabolic intermediate biosynthesis; acetyl-CoA biosynthesis; acetyl-CoA from acetate: step 1/2. Catalyzes the formation of acetyl phosphate from acetate and ATP. Can also catalyze the reverse reaction. This Thermoanaerobacter pseudethanolicus (strain ATCC 33223 / 39E) (Clostridium thermohydrosulfuricum) protein is Acetate kinase.